The sequence spans 212 residues: Thymidylate kinase (212 aa).

10–17 serves as a coordination point for ATP; the sequence is GLEGAGKT.

Belongs to the thymidylate kinase family.

The enzyme catalyses dTMP + ATP = dTDP + ADP. Functionally, phosphorylation of dTMP to form dTDP in both de novo and salvage pathways of dTTP synthesis. This Cronobacter sakazakii (strain ATCC BAA-894) (Enterobacter sakazakii) protein is Thymidylate kinase.